A 156-amino-acid polypeptide reads, in one-letter code: uncharacterized protein (156 aa).

Residues 1-12 (MSARPSLPPLPA) show a composition bias toward pro residues. Disordered regions lie at residues 1-89 (MSAR…PPPA) and 129-156 (PLSPPAKRRGIRTWGHPSYLTPSPTMRD). Positions 49 to 67 (ARAEEAGGEEGKREAEAWT) are enriched in basic and acidic residues.

This is an uncharacterized protein from Homo sapiens (Human).